The following is a 128-amino-acid chain: Con-Ins F2b (128 aa).

The N-terminal stretch at 1 to 24 (MTTSSYFLLVALGLLLYVCRSSFG) is a signal peptide. 4 disulfides stabilise this stretch: Cys-29–Cys-104, Cys-41–Cys-107, Cys-53–Cys-120, and Cys-106–Cys-111. The propeptide at 59 to 89 (LQGGTGKKRGRASLLRKRRAFLSMLKARAKR) is c peptide. Glu-115 is modified (4-carboxyglutamate; partial). Ser-127 is subject to Serine amide.

Belongs to the insulin family. In terms of assembly, heterodimer of A and B chains; disulfide-linked. In terms of tissue distribution, expressed by the venom gland.

It localises to the secreted. Functionally, this venom insulin facilitates prey capture by rapidly inducing hypoglycemic shock. Intraperitoneal injection of this peptide into zebrafish lowers blood glucose with the same potency than human insulin. In vivo, when applied to water, this peptide reduces overall locomotor activity of zebrafish larvae, observed as a significant decrease in the percentage of time spent swimming and movement frequency. In Conus floridulus (Cone snail), this protein is Con-Ins F2b.